The sequence spans 244 residues: Uridylate kinase (244 aa).

K17–G20 contributes to the ATP binding site. Positions G25 to G30 are involved in allosteric activation by GTP. Position 59 (G59) interacts with UMP. ATP-binding residues include G60 and R64. Residues D80 and V141–T148 contribute to the UMP site. 4 residues coordinate ATP: T168, Q169, Y174, and D177.

The protein belongs to the UMP kinase family. Homohexamer.

The protein localises to the cytoplasm. It catalyses the reaction UMP + ATP = UDP + ADP. It functions in the pathway pyrimidine metabolism; CTP biosynthesis via de novo pathway; UDP from UMP (UMPK route): step 1/1. Its activity is regulated as follows. Allosterically activated by GTP. Inhibited by UTP. In terms of biological role, catalyzes the reversible phosphorylation of UMP to UDP. In Ehrlichia ruminantium (strain Welgevonden), this protein is Uridylate kinase.